We begin with the raw amino-acid sequence, 247 residues long: 5'-nucleotidase SurE (247 aa).

4 residues coordinate a divalent metal cation: Asp8, Asp9, Ser39, and Asn91.

The protein belongs to the SurE nucleotidase family. It depends on a divalent metal cation as a cofactor.

The protein localises to the cytoplasm. The catalysed reaction is a ribonucleoside 5'-phosphate + H2O = a ribonucleoside + phosphate. In terms of biological role, nucleotidase that shows phosphatase activity on nucleoside 5'-monophosphates. The polypeptide is 5'-nucleotidase SurE (Laribacter hongkongensis (strain HLHK9)).